The following is a 287-amino-acid chain: Carbon monoxide dehydrogenase medium chain (287 aa).

An FAD-binding PCMH-type domain is found at 1-177 (MIPPRFEYHA…VEIRVPAFAQ (177 aa)). FAD contacts are provided by residues 32 to 36 (AGGHS) and 111 to 115 (TIGGD).

Dimer of heterotrimers. Each heterotrimer consists of a large, a medium and a small subunit. The cofactor is FAD.

The catalysed reaction is CO + a quinone + H2O = a quinol + CO2. Functionally, catalyzes the oxidation of carbon monoxide to carbon dioxide. The chain is Carbon monoxide dehydrogenase medium chain (cutM) from Hydrogenophaga pseudoflava (Pseudomonas carboxydoflava).